The following is a 229-amino-acid chain: Protein-L-isoaspartate O-methyltransferase (229 aa).

Serine 65 is an active-site residue.

Belongs to the methyltransferase superfamily. L-isoaspartyl/D-aspartyl protein methyltransferase family.

It localises to the cytoplasm. It catalyses the reaction [protein]-L-isoaspartate + S-adenosyl-L-methionine = [protein]-L-isoaspartate alpha-methyl ester + S-adenosyl-L-homocysteine. Functionally, catalyzes the methyl esterification of L-isoaspartyl residues in peptides and proteins that result from spontaneous decomposition of normal L-aspartyl and L-asparaginyl residues. It plays a role in the repair and/or degradation of damaged proteins. The chain is Protein-L-isoaspartate O-methyltransferase from Chlorobium phaeovibrioides (strain DSM 265 / 1930) (Prosthecochloris vibrioformis (strain DSM 265)).